A 312-amino-acid chain; its full sequence is Protein Rep40 (312 aa).

In terms of domain architecture, SF3 helicase spans 84–239 (DPQYAASVFL…LDHDFGKVTK (156 aa)). 110–117 (GPATTGKT) serves as a coordination point for ATP. The interval 264-301 (KGGAKKRPAPSDADISEPKRVRESVAQPSTSDAEASIN) is disordered.

As to quaternary structure, homooligomer.

The protein resides in the host nucleus. The enzyme catalyses ATP + H2O = ADP + phosphate + H(+). Plays a critical role during packaging of viral DNA into empty capsids, where they are thought to be part of the packaging motor complex. The single stranded genomic DNA is packaged in a 3' to 5' direction and requires the association of viral DNA with Rep40. The protein is Protein Rep40 (Rep40) of Mammalia (AAV-2).